A 201-amino-acid polypeptide reads, in one-letter code: Holliday junction branch migration complex subunit RuvA (201 aa).

The tract at residues 1–63 (MYDYIKGTVT…EDNISLFGFQ (63 aa)) is domain I. Positions 64-142 (TTEERYLFKK…DVVASEIVYV (79 aa)) are domain II. The segment at 143–153 (APENDMVAGLS) is flexible linker. The segment at 153–201 (SPQLEEAVLALEALGYSTRELKKVIPKLAKEADLTSDAYIKLALQLMTK) is domain III.

This sequence belongs to the RuvA family. In terms of assembly, homotetramer. Forms an RuvA(8)-RuvB(12)-Holliday junction (HJ) complex. HJ DNA is sandwiched between 2 RuvA tetramers; dsDNA enters through RuvA and exits via RuvB. An RuvB hexamer assembles on each DNA strand where it exits the tetramer. Each RuvB hexamer is contacted by two RuvA subunits (via domain III) on 2 adjacent RuvB subunits; this complex drives branch migration. In the full resolvosome a probable DNA-RuvA(4)-RuvB(12)-RuvC(2) complex forms which resolves the HJ.

It localises to the cytoplasm. Its function is as follows. The RuvA-RuvB-RuvC complex processes Holliday junction (HJ) DNA during genetic recombination and DNA repair, while the RuvA-RuvB complex plays an important role in the rescue of blocked DNA replication forks via replication fork reversal (RFR). RuvA specifically binds to HJ cruciform DNA, conferring on it an open structure. The RuvB hexamer acts as an ATP-dependent pump, pulling dsDNA into and through the RuvAB complex. HJ branch migration allows RuvC to scan DNA until it finds its consensus sequence, where it cleaves and resolves the cruciform DNA. The sequence is that of Holliday junction branch migration complex subunit RuvA from Listeria monocytogenes serovar 1/2a (strain ATCC BAA-679 / EGD-e).